Here is a 117-residue protein sequence, read N- to C-terminus: Ig heavy chain V region 1-62-3 (117 aa).

Positions Met-1–Phe-19 are cleaved as a signal peptide. A framework-1 region spans residues Gln-20 to Thr-49. The interval Ser-50–His-54 is complementarity-determining-1. The framework-2 stretch occupies residues Trp-55 to Gly-68. Residues Arg-69–Ser-85 form a complementarity-determining-2 region. Positions Lys-86–Arg-117 are framework-3.

The polypeptide is Ig heavy chain V region 1-62-3 (Ighv1-62-3) (Mus musculus (Mouse)).